Here is a 202-residue protein sequence, read N- to C-terminus: GPI-anchored hemophore cfmB (202 aa).

An N-terminal signal peptide occupies residues 1–18 (MHFSRTSLILFAAGLASA). A CFEM domain is found at 19–108 (QLPNVPGCSL…STTASETATT (90 aa)). Disulfide bonds link Cys26–Cys67, Cys30–Cys62, Cys40–Cys48, and Cys50–Cys83. Residue Asp45 participates in heme binding. Positions 94–171 (PVGAASTTAS…PSSQSTSASA (78 aa)) are disordered. Residues 97–171 (AASTTASETA…PSSQSTSASA (75 aa)) show a composition bias toward low complexity. The GPI-anchor amidated asparagine moiety is linked to residue Asn180. Residues 181 to 202 (AGSEKANVAGVVAVAAAALYLL) constitute a propeptide, removed in mature form.

The protein belongs to the RBT5 family. Post-translationally, the GPI-anchor is attached to the protein in the endoplasmic reticulum and serves to target the protein to the cell surface. There, the glucosamine-inositol phospholipid moiety is cleaved off and the GPI-modified mannoprotein is covalently attached via its lipidless GPI glycan remnant to the 1,6-beta-glucan of the outer cell wall layer.

Its subcellular location is the secreted. It localises to the cell wall. It is found in the cell membrane. GPI-anchored cell wall protein involved in stabilizing the cell wall. Not implicated in virulence, heme uptake and biofilm formation. This Aspergillus fumigatus (strain ATCC MYA-4609 / CBS 101355 / FGSC A1100 / Af293) (Neosartorya fumigata) protein is GPI-anchored hemophore cfmB.